The chain runs to 536 residues: Heparanase-like protein 3 (536 aa).

A signal peptide spans 1-24 (MAYRQILAIVLFLCVFQFLDCTVS). N-linked (GlcNAc...) asparagine glycosylation is found at N30, N122, N176, and N191. Catalysis depends on E202, which acts as the Proton donor. N-linked (GlcNAc...) asparagine glycosylation is found at N265 and N308. The active-site Nucleophile is the E319. N-linked (GlcNAc...) asparagine glycosylation is found at N370, N427, N438, and N510.

It belongs to the glycosyl hydrolase 79 family.

Its subcellular location is the lysosome membrane. The protein resides in the secreted. Endoglycosidase which is a cell surface and extracellular matrix-degrading enzyme. Cleaves heparan sulfate proteoglycans (HSPGs) into heparan sulfate side chains and core proteoglycans. The protein is Heparanase-like protein 3 of Arabidopsis thaliana (Mouse-ear cress).